Reading from the N-terminus, the 436-residue chain is Adenylosuccinate synthetase (436 aa).

Residues 12–18 (GDEGKGK) and 40–42 (GHT) each bind GTP. Asp-13 serves as the catalytic Proton acceptor. 2 residues coordinate Mg(2+): Asp-13 and Gly-40. Residues 13–16 (DEGK), 38–41 (NAGH), Thr-128, Arg-142, Gln-223, Thr-238, and Arg-302 each bind IMP. The active-site Proton donor is His-41. A substrate-binding site is contributed by 298-304 (TTTGRRR). GTP contacts are provided by residues Arg-304, 330-332 (KLD), and 412-414 (SLG).

It belongs to the adenylosuccinate synthetase family. As to quaternary structure, homodimer. Mg(2+) serves as cofactor.

The protein localises to the cytoplasm. It catalyses the reaction IMP + L-aspartate + GTP = N(6)-(1,2-dicarboxyethyl)-AMP + GDP + phosphate + 2 H(+). It functions in the pathway purine metabolism; AMP biosynthesis via de novo pathway; AMP from IMP: step 1/2. Functionally, plays an important role in the de novo pathway of purine nucleotide biosynthesis. Catalyzes the first committed step in the biosynthesis of AMP from IMP. This is Adenylosuccinate synthetase from Prochlorococcus marinus (strain AS9601).